The primary structure comprises 484 residues: Regulator of G-protein signaling 9 (484 aa).

Residues 30–105 form the DEP domain; the sequence is PDTGVKTQSQ…PDSSLYRFQT (76 aa). The 62-residue stretch at 219-280 folds into the G protein gamma domain; that stretch reads ITAVKKEIMY…ITDDTQFWDL (62 aa). The 116-residue stretch at 299–414 folds into the RGS domain; the sequence is NFSELIRDPK…LKSPIYKEML (116 aa).

As to quaternary structure, heterodimer with Gbeta5. Interacts with RGS7BP, leading to regulate the subcellular location of the heterodimer formed with Gbeta5. Component of the RGS9-1-Gbeta5 complex composed of RGS9 (RGS9-1), Gbeta5 (GNB5) and RGS9BP. Post-translationally, phosphorylation is decreased by light exposition.

The protein localises to the membrane. Functionally, inhibits signal transduction by increasing the GTPase activity of G protein alpha subunits thereby driving them into their inactive GDP-bound form. Binds to G(t)-alpha. Involved in phototransduction; key element in the recovery phase of visual transduction. This Tamias striatus (Eastern chipmunk) protein is Regulator of G-protein signaling 9.